Reading from the N-terminus, the 515-residue chain is Bifunctional NAD(P)H-hydrate repair enzyme Nnr (515 aa).

Residues 1 to 227 (MTDHTMKKNP…GLDSWLAGQE (227 aa)) form an NAD(P)H-hydrate epimerase region. The 203-residue stretch at 23-225 (IRRGEREAAD…SLGLDSWLAG (203 aa)) folds into the YjeF N-terminal domain. The tract at residues 71-75 (NNGGD) is NADPHX 1; for epimerase activity. Residues N72 and D135 each contribute to the K(+) site. Positions 139–145 (GTGLRQA) are NADPHX 1; for epimerase activity. D168 serves as a coordination point for (6S)-NADPHX. K(+) is bound at residue S171. The YjeF C-terminal domain maps to 234-501 (SAEQLSHWLK…STLQRIVNPE (268 aa)). An ADP-dependent (S)-NAD(P)H-hydrate dehydratase region spans residues 235–515 (AEQLSHWLKP…NHDESSNSAP (281 aa)). G329 contacts (6S)-NADPHX. The tract at residues 375 to 381 (HPGEAAR) is NADPHX 2; for dehydratase activity. Residues 412 to 416 (KGAGT) and 432 to 441 (NAGMASGGMG) each bind ADP. Residue D442 participates in (6S)-NADPHX binding.

The protein in the N-terminal section; belongs to the NnrE/AIBP family. This sequence in the C-terminal section; belongs to the NnrD/CARKD family. Requires K(+) as cofactor.

It carries out the reaction (6S)-NADHX + ADP = AMP + phosphate + NADH + H(+). It catalyses the reaction (6S)-NADPHX + ADP = AMP + phosphate + NADPH + H(+). The enzyme catalyses (6R)-NADHX = (6S)-NADHX. The catalysed reaction is (6R)-NADPHX = (6S)-NADPHX. Functionally, bifunctional enzyme that catalyzes the epimerization of the S- and R-forms of NAD(P)HX and the dehydration of the S-form of NAD(P)HX at the expense of ADP, which is converted to AMP. This allows the repair of both epimers of NAD(P)HX, a damaged form of NAD(P)H that is a result of enzymatic or heat-dependent hydration. The protein is Bifunctional NAD(P)H-hydrate repair enzyme Nnr (nnr) of Escherichia coli (strain K12).